The following is a 509-amino-acid chain: Cytochrome P450 monooxygenase aba1 (509 aa).

The signal sequence occupies residues 1-31 (MSNSILNLGSFACLLSLGSIVLWYTISAVLA). N-linked (GlcNAc...) asparagine glycosylation is present at Asn-402. Cys-451 serves as a coordination point for heme. A glycan (N-linked (GlcNAc...) asparagine) is linked at Asn-462.

The protein belongs to the cytochrome P450 family. Heme serves as cofactor.

The protein operates within hormone biosynthesis. Functionally, cytochrome P450 monooxygenase; part of the gene cluster that mediates the biosynthesis of abscisic acid (ABA), a phytohormone that acts antagonistically toward salicylic acid (SA), jasmonic acid (JA) and ethylene (ETH) signaling, to impede plant defense responses. The first step of the pathway catalyzes the reaction from farnesyl diphosphate to alpha-ionylideneethane performed by the alpha-ionylideneethane synthase aba3 via a three-step reaction mechanism involving 2 neutral intermediates, beta-farnesene and allofarnesene. The cytochrome P450 monooxygenase aba1 might then be involved in the conversion of alpha-ionylideneethane to alpha-ionylideneacetic acid. Alpha-ionylideneacetic acid is further converted to abscisic acid in 2 steps involving the cytochrome P450 monooxygenase aba2 and the short-chain dehydrogenase/reductase aba4, via the intermediates 1'-deoxy-ABA or 1',4'-trans-diol-ABA, depending on the order of action of these 2 enzymes. Aba2 is responsible for the hydroxylation of carbon atom C-1' and aba4 might be involved in the oxidation of the C-4' carbon atom. The sequence is that of Cytochrome P450 monooxygenase aba1 (aba1) from Botryotinia fuckeliana (strain B05.10) (Noble rot fungus).